A 313-amino-acid polypeptide reads, in one-letter code: Ornithine carbamoyltransferase (313 aa).

Residues 61-64 (STRT), Gln88, Arg112, and 139-142 (HPCQ) each bind carbamoyl phosphate. Residues Asn170, Asp228, and 232–233 (SM) contribute to the L-ornithine site. Carbamoyl phosphate-binding positions include 268 to 269 (CL) and Arg296.

The protein belongs to the aspartate/ornithine carbamoyltransferase superfamily. OTCase family.

It localises to the cytoplasm. It carries out the reaction carbamoyl phosphate + L-ornithine = L-citrulline + phosphate + H(+). It participates in amino-acid biosynthesis; L-arginine biosynthesis; L-arginine from L-ornithine and carbamoyl phosphate: step 1/3. In terms of biological role, reversibly catalyzes the transfer of the carbamoyl group from carbamoyl phosphate (CP) to the N(epsilon) atom of ornithine (ORN) to produce L-citrulline. The protein is Ornithine carbamoyltransferase of Bordetella parapertussis (strain 12822 / ATCC BAA-587 / NCTC 13253).